A 277-amino-acid chain; its full sequence is Glycerol-3-phosphate acyltransferase (277 aa).

Transmembrane regions (helical) follow at residues 3-23, 55-75, 79-99, 111-131, and 155-175; these read LFIF…AIIV, IMVM…AKFL, PVTV…PVFF, IGAL…TWLL, and LILV…ILVL. The segment at 207–277 is disordered; it reads SPATSAEQEF…PKTKTVKEKE (71 aa). The span at 216-239 shows a compositional bias: basic and acidic residues; that stretch reads FPGKEVIDTNIDETEKTEQAEAVK. 2 stretches are compositionally biased toward basic residues: residues 240–253 and 262–271; these read KPKV…AKKT and KPKSTKPKTK.

It belongs to the PlsY family. Probably interacts with PlsX.

It is found in the cell inner membrane. The catalysed reaction is an acyl phosphate + sn-glycerol 3-phosphate = a 1-acyl-sn-glycero-3-phosphate + phosphate. Its pathway is lipid metabolism; phospholipid metabolism. In terms of biological role, catalyzes the transfer of an acyl group from acyl-phosphate (acyl-PO(4)) to glycerol-3-phosphate (G3P) to form lysophosphatidic acid (LPA). This enzyme utilizes acyl-phosphate as fatty acyl donor, but not acyl-CoA or acyl-ACP. This Legionella pneumophila subsp. pneumophila (strain Philadelphia 1 / ATCC 33152 / DSM 7513) protein is Glycerol-3-phosphate acyltransferase.